We begin with the raw amino-acid sequence, 973 residues long: Isoleucine--tRNA ligase, mitochondrial (973 aa).

Positions 87-97 (PFANGRLHIGH) match the 'HIGH' region motif. Residues 625-629 (KQSKS) carry the 'KMSKS' region motif. Residue K628 coordinates ATP.

Belongs to the class-I aminoacyl-tRNA synthetase family.

The protein localises to the cytoplasm. It localises to the mitochondrion matrix. It carries out the reaction tRNA(Ile) + L-isoleucine + ATP = L-isoleucyl-tRNA(Ile) + AMP + diphosphate. In Schizosaccharomyces pombe (strain 972 / ATCC 24843) (Fission yeast), this protein is Isoleucine--tRNA ligase, mitochondrial (ism1).